We begin with the raw amino-acid sequence, 79 residues long: uncharacterized protein (79 aa).

Transmembrane regions (helical) follow at residues 28-48 and 51-71; these read CIILSGFAGLCMAYLYYALLA and VALTEAILGGAILPALFAFTV.

Its subcellular location is the cell membrane. This is an uncharacterized protein from Methanocaldococcus jannaschii (strain ATCC 43067 / DSM 2661 / JAL-1 / JCM 10045 / NBRC 100440) (Methanococcus jannaschii).